We begin with the raw amino-acid sequence, 252 residues long: UPF0273 protein MK0039 (252 aa).

Positions 4-248 (ERVSTGIPGM…VFVKERGEVR (245 aa)) constitute a KaiC domain. 31 to 38 (GGPGTGKT) contacts ATP.

The protein belongs to the UPF0273 family.

In Methanopyrus kandleri (strain AV19 / DSM 6324 / JCM 9639 / NBRC 100938), this protein is UPF0273 protein MK0039.